The sequence spans 336 residues: Adenosine deaminase (336 aa).

H15 and H17 together coordinate Zn(2+). Residues H17, D19, and G172 each coordinate substrate. H199 is a Zn(2+) binding site. Catalysis depends on E202, which acts as the Proton donor. D279 is a binding site for Zn(2+).

The protein belongs to the metallo-dependent hydrolases superfamily. Adenosine and AMP deaminases family. Adenosine deaminase subfamily. The cofactor is Zn(2+).

The enzyme catalyses adenosine + H2O + H(+) = inosine + NH4(+). The catalysed reaction is 2'-deoxyadenosine + H2O + H(+) = 2'-deoxyinosine + NH4(+). Functionally, catalyzes the hydrolytic deamination of adenosine and 2-deoxyadenosine. This Streptococcus thermophilus (strain ATCC BAA-250 / LMG 18311) protein is Adenosine deaminase.